The chain runs to 486 residues: G2/mitotic-specific cyclin-4 (486 aa).

2 disordered regions span residues 1 to 80 (MRSY…SSNK) and 105 to 126 (VLLN…DKEN). The span at 25 to 41 (ANLSSNHTTAGQPSTSS) shows a compositional bias: polar residues. The segment covering 108 to 123 (NDDDDETDDEFDDEED) has biased composition (acidic residues). A coiled-coil region spans residues 122–184 (EDKENRYHDL…QSHTQDMRSI (63 aa)). Residues 234 to 359 (EIFNYLHELE…FMIDVLEFDL (126 aa)) form the Cyclin N-terminal domain.

Belongs to the cyclin family. Cyclin AB subfamily. As to quaternary structure, interacts with IQG1.

In terms of biological role, 2/mitotic-specific cyclin essential for the control of the cell cycle at the G2/M (mitosis) transition. G2/M cyclins accumulate steadily during G2 and are abruptly destroyed at mitosis. Degradation is necessary for the cell to exit from mitosis. Plays a role in morphogenesis by negatively regulating polarized growth. Through binding to CDC28 regulates cytokinesis, partly by phosphorylation of the actomyosin ring component IQG1. In Candida albicans (strain SC5314 / ATCC MYA-2876) (Yeast), this protein is G2/mitotic-specific cyclin-4 (CLB4).